Reading from the N-terminus, the 570-residue chain is Methionine--tRNA ligase (570 aa).

The 'HIGH' region motif lies at 11-21 (PYVQTVPHLGN). Residues C143, C146, C156, and C159 each contribute to the Zn(2+) site. The 'KMSKS' region signature appears at 333 to 337 (KFSKS). K336 is an ATP binding site.

This sequence belongs to the class-I aminoacyl-tRNA synthetase family. MetG type 1 subfamily. Requires Zn(2+) as cofactor.

The protein localises to the cytoplasm. It carries out the reaction tRNA(Met) + L-methionine + ATP = L-methionyl-tRNA(Met) + AMP + diphosphate. In terms of biological role, is required not only for elongation of protein synthesis but also for the initiation of all mRNA translation through initiator tRNA(fMet) aminoacylation. The protein is Methionine--tRNA ligase of Pyrobaculum aerophilum (strain ATCC 51768 / DSM 7523 / JCM 9630 / CIP 104966 / NBRC 100827 / IM2).